A 688-amino-acid polypeptide reads, in one-letter code: NADPH-dependent diflavin oxidoreductase 1 (688 aa).

The interval 26 to 76 (HLHRHADTSPTNQHNTSHKMTTTEPIHVTTGSGESRDHTEPRHVTPTSPNA) is disordered. Residues 33 to 58 (TSPTNQHNTSHKMTTTEPIHVTTGSG) are compositionally biased toward polar residues. Basic and acidic residues predominate over residues 59-68 (ESRDHTEPRH). The region spanning 82 to 227 (ITIAYATETG…MYNEWQARFC (146 aa)) is the Flavodoxin-like domain. Residues 88-93 (TETGNA), 136-139 (STTG), 174-183 (LGDSSYPRFN), and Asp209 contribute to the FMN site. The 267-residue stretch at 277 to 543 (KDVLQGTVVG…KHSTPIPDLD (267 aa)) folds into the FAD-binding FR-type domain. FAD contacts are provided by residues Arg453, 483 to 486 (RLFS), and 515 to 518 (GVLT). NADP(+)-binding positions include Thr554, 607–608 (SR), and 613–617 (GGYVQ). Trp688 contributes to the FAD binding site.

The protein belongs to the NADPH-dependent diflavin oxidoreductase NDOR1 family. This sequence in the N-terminal section; belongs to the flavodoxin family. It in the C-terminal section; belongs to the flavoprotein pyridine nucleotide cytochrome reductase family. As to quaternary structure, interacts with DRE2; as part of the cytosolic iron-sulfur (Fe-S) protein assembly (CIA) machinery. Requires FAD as cofactor. FMN is required as a cofactor.

It localises to the cytoplasm. The protein resides in the mitochondrion. It carries out the reaction 2 oxidized [2Fe-2S]-[protein] + NADPH = 2 reduced [2Fe-2S]-[protein] + NADP(+) + H(+). NADPH-dependent reductase which is a central component of the cytosolic iron-sulfur (Fe-S) protein assembly (CIA) machinery. Transfers electrons from NADPH via its FAD and FMN prosthetic groups to the [2Fe-2S] cluster of DRE2, another key component of the CIA machinery. In turn, this reduced cluster provides electrons for assembly of cytosolic iron-sulfur cluster proteins. Positively controls H(2)O(2)-induced cell death. The chain is NADPH-dependent diflavin oxidoreductase 1 from Yarrowia lipolytica (strain CLIB 122 / E 150) (Yeast).